A 184-amino-acid chain; its full sequence is RNA 2',3'-cyclic phosphodiesterase (184 aa).

Histidine 40 serves as the catalytic Proton donor. 2 short sequence motifs (HXTX) span residues histidine 40–leucine 43 and histidine 125–leucine 128. Histidine 125 serves as the catalytic Proton acceptor.

The protein belongs to the 2H phosphoesterase superfamily. ThpR family.

The enzyme catalyses a 3'-end 2',3'-cyclophospho-ribonucleotide-RNA + H2O = a 3'-end 2'-phospho-ribonucleotide-RNA + H(+). Functionally, hydrolyzes RNA 2',3'-cyclic phosphodiester to an RNA 2'-phosphomonoester. In vitro, ligates 5' and 3' half-tRNA molecules with 2',3'-cyclic phosphate and 5'-hydroxyl termini, respectively, to the product containing the 2'-5' phosphodiester linkage. Ligase activity requires GTP, but GTP hydrolysis is not required for the reaction, which is reversible. Ligase activity is weak compared to the phosphodiesterase activity. The protein is RNA 2',3'-cyclic phosphodiesterase of Pyrococcus furiosus (strain ATCC 43587 / DSM 3638 / JCM 8422 / Vc1).